Reading from the N-terminus, the 271-residue chain is Transmembrane protein 150A (271 aa).

Topologically, residues 1 to 2 (MT) are cytoplasmic. A helical membrane pass occupies residues 3–23 (AWILLPVSLSAFSITGIWTVY). The Extracellular segment spans residues 24–75 (AMAVMNRHVCPVENWSYNESCSPDPAEQGGPKSCCTLDDVPLISKCGTYPPE). N-linked (GlcNAc...) asparagine glycans are attached at residues asparagine 37 and asparagine 41. The helical transmembrane segment at 76-96 (SCLFSLIGNMGAVMVALICLL) threads the bilayer. The Cytoplasmic segment spans residues 97–108 (RYGQLLEQSRHS). A helical membrane pass occupies residues 109–129 (WINTTALITGCTNAAGLVVVG). Residues 130–140 (NFQVDHAKSLH) lie on the Extracellular side of the membrane. The helical transmembrane segment at 141–161 (YIGTGVAFTAGLLFVCLHCVL) threads the bilayer. Residues 162–178 (FYHGATTPLDMAMAYLR) lie on the Cytoplasmic side of the membrane. The chain crosses the membrane as a helical span at residues 179-199 (SVLAVIAFITLVLSGVFFLHE). Topologically, residues 200 to 211 (SSQLQHGAALCE) are extracellular. Residues 212-232 (WVFVLDILIFYGTFSYEFGTI) form a helical membrane-spanning segment. At 233-271 (SSDTLVAALQPAPGRACKSSGSSSTSTHLNCAPESIAMI) the chain is on the cytoplasmic side.

It belongs to the DRAM/TMEM150 family. As to quaternary structure, interacts (via C-terminal cytoplasmic tail) with PI4KA.

Its subcellular location is the cell membrane. Its function is as follows. Regulates localization of phosphatidylinositol 4-kinase (PI4K) to the plasma membrane, possibly by reducing the association of TTC7 (TTC7A or TTC7B) with the PI4K complex. Acts as a regulator of phosphatidylinositol 4-phosphate (PtdIns(4)P) synthesis. May also play a role in fasting-induced catabolism. In Mus musculus (Mouse), this protein is Transmembrane protein 150A (Tmem150a).